Consider the following 83-residue polypeptide: Apolipoprotein C-I, acidic form (83 aa).

The N-terminal stretch at 1–26 is a signal peptide; the sequence is MRLFLSLPVLVVVLSIVLEGPAPAQG.

It belongs to the apolipoprotein C1 family.

It localises to the secreted. This is Apolipoprotein C-I, acidic form (APOC1A) from Pan paniscus (Pygmy chimpanzee).